We begin with the raw amino-acid sequence, 157 residues long: Small ribosomal subunit protein uS7 (157 aa).

It belongs to the universal ribosomal protein uS7 family. Part of the 30S ribosomal subunit. Contacts proteins S9 and S11.

In terms of biological role, one of the primary rRNA binding proteins, it binds directly to 16S rRNA where it nucleates assembly of the head domain of the 30S subunit. Is located at the subunit interface close to the decoding center, probably blocks exit of the E-site tRNA. This Chlamydia muridarum (strain MoPn / Nigg) protein is Small ribosomal subunit protein uS7.